We begin with the raw amino-acid sequence, 162 residues long: MSLVKLESSDEKVFEIEKEIACMSVTIKNMIEDIGESDAPIPLPNVTSTILEKVLDYCRHHHQHPSPQGDDKKDEKRLDDIPPYDRDFCKVDQPTLFELILAANYLDIKPLLDVTCKTVANMIRGKTPEEIRKIFNIKNDFTPEEEEQIRKENEWCEDKGGN.

Position 2 is an N-acetylserine (serine 2). Residues 100-162 (ILAANYLDIK…NEWCEDKGGN (63 aa)) form an interaction with the F-box domain of F-box proteins region. At proline 143 the chain carries 4-hydroxyproline. Residue proline 143 is glycosylated (O-linked (GlcNAc...) hydroxyproline).

This sequence belongs to the SKP1 family. As to quaternary structure, multiprotein complex (SCF) with cullin and F-box-containing protein. Capable of undergoing aggregation. Post-translationally, O-linked glycan consists of linear Gal-Gal-Fuc-Gal-GlcNAc. In terms of processing, not glycosylated in prespore cells. FpaA and fpaB seem to be identically glycosylated. Glycosylation is required for nuclear enrichment. Post-translationally, hydroxylated by phyA.

The protein resides in the cytoplasm. It localises to the nucleus. The chain is SCF ubiquitin ligase complex protein SKP1b (fpaB-1) from Dictyostelium discoideum (Social amoeba).